Here is a 1098-residue protein sequence, read N- to C-terminus: MASCWRLILFLSVTRWLSDYSEALSGLSTSYAALLRIKKSSTSPFGSKSRPRFSSPSLGTISVSPPSWRGAAQQYHSPGNLYHSSDAFRQDESVDYGPVFVQEPDDVIFPTDSDEKKVALNCEVRGNPSPSYRWLRNGTEIALESDYRYSLIDGTFIISNPSELRDSGLYQCLATNSFGSILSREATLQFAYLGNFSGRTRSAVSVREGQGVVLMCSPPPHSPEIIYSWVFNEFPSFVAEDSRRFISQETGNLYISKVQTSDVGSYICLVKNAVTNARVLSPPTPLTLRNDGVMGEYEPKIEVHFPFTVTAAKGTTVKMECFALGNPVPTITWMKVNGYIPSKSRLRKSQAVLEIPNLQLDDAGIYECTAENSRGKNSFRGQLQIFTYPHWVQKLNDTQLDSGSPLQWECKATGKPRPTYRWLKNGAPLLPQSRVDTVNGILAIQSVNQSDAGMYQCLAENKYGAIYASAELKILASPPSFELNQVKKSIIVTKDRGVLIECEPQGSPKPAISWRKGDKAVRANKRIAILPDGSLRILNASKADEGKYICQGVNIFGSAEIIASLSVKEPTRIELTPKRTELTVGESIVLNCKAIHDASLDVTFYWTLKGQPIDFEKEGGHFENIRAQASSADLMIRNILLMHAGRYGCRVQTTADSVSDEAELLVRGPPGPPGVVIVEEITESTATLSWSPATDNHSPISSYNLQARSPFSLGWQTVKTVPEVITGDMESAMAVDLNPWVEYEFRVVATNPIGTGDPSIPSRMIRTNEAVPKTAPSNVSGRSGRRHELVIAWEPVSEEFQNGEGFGYIVAFRPNGTRGWKEKMVTSSEASKFIYRDESVPPLTPFEVKVGVYNNKGDGPFSQIVVICSAEGEPTAAPTDVTATSVSVSEIFVVWKHVKESLGRPQGFEISYWKDTEPEDSVETVRTRGNESFVMLTGLEGNTLYHLTVRAYNGAGYGPPSREASTTTKRHPPREPPGNLRWEQQGSQVSLGWEPVRPLANESEVMGYKVFYRQEGHSEGQVIETQKPQAVVPLPEAGVYIIEVRAYSEGGDGTASSQIRVPSYSGGKITSAQSTLHSLSKWSSVTLLLALMLPSSSW.

The N-terminal stretch at 1-23 is a signal peptide; sequence MASCWRLILFLSVTRWLSDYSEA. Ig-like C2-type domains follow at residues 98 to 189, 195 to 281, 299 to 384, 389 to 473, 479 to 568, and 570 to 659; these read PVFV…ATLQ, NFSG…RVLS, PKIE…GQLQ, PHWV…AELK, PSFE…LSVK, and PTRI…DSVS. A disulfide bond links cysteine 122 and cysteine 172. 2 N-linked (GlcNAc...) asparagine glycosylation sites follow: asparagine 137 and asparagine 195. Cystine bridges form between cysteine 216-cysteine 268 and cysteine 321-cysteine 368. Residues asparagine 396, asparagine 448, and asparagine 539 are each glycosylated (N-linked (GlcNAc...) asparagine). 3 cysteine pairs are disulfide-bonded: cysteine 410–cysteine 457, cysteine 502–cysteine 550, and cysteine 592–cysteine 649. Fibronectin type-III domains follow at residues 672–770, 775–872, 877–971, and 976–1066; these read PPGV…TNEA, APSN…SAEG, APTD…TKRH, and PPGN…SYSG. 3 N-linked (GlcNAc...) asparagine glycosylation sites follow: asparagine 778, asparagine 815, and asparagine 930. Positions 956–982 are disordered; that stretch reads GYGPPSREASTTTKRHPPREPPGNLRW. Asparagine 1001 carries an N-linked (GlcNAc...) asparagine glycan. Residue serine 1071 is the site of GPI-anchor amidated serine attachment. Residues 1072–1098 constitute a propeptide, removed in mature form; sequence AQSTLHSLSKWSSVTLLLALMLPSSSW.

It belongs to the immunoglobulin superfamily. Contactin family. As to quaternary structure, interacts with PTPRG. Expressed in the nervous system. Preferentially expressed in the central auditory pathways.

Its subcellular location is the cell membrane. Contactins mediate cell surface interactions during nervous system development. Has some neurite outgrowth-promoting activity in the cerebral cortical neurons but not in hippocampal neurons. Involved in neuronal activity in the auditory system. This Mus musculus (Mouse) protein is Contactin-5 (Cntn5).